The chain runs to 644 residues: DNA mismatch repair protein MutL (644 aa).

Residues Lys-340–Glu-360 are compositionally biased toward basic and acidic residues. The segment at Lys-340–Thr-425 is disordered. Over residues Gln-387–Gln-400 the composition is skewed to low complexity. Positions Glu-416 to Thr-425 are enriched in basic and acidic residues.

Belongs to the DNA mismatch repair MutL/HexB family.

Functionally, this protein is involved in the repair of mismatches in DNA. It is required for dam-dependent methyl-directed DNA mismatch repair. May act as a 'molecular matchmaker', a protein that promotes the formation of a stable complex between two or more DNA-binding proteins in an ATP-dependent manner without itself being part of a final effector complex. The polypeptide is DNA mismatch repair protein MutL (Bacillus mycoides (strain KBAB4) (Bacillus weihenstephanensis)).